Reading from the N-terminus, the 53-residue chain is Non-classical export protein 1 (53 aa).

The chain crosses the membrane as a helical span at residues 7–29 (FLLGKFSDPLLAIMVGCLSYYVY).

It belongs to the NCE101 family.

It is found in the membrane. Functionally, involved in a novel pathway of export of proteins that lack a cleavable signal sequence. May be part of the export machinery or may also be a substrate for non-classical export. The protein is Non-classical export protein 1 (NCE101) of Saccharomyces cerevisiae (strain ATCC 204508 / S288c) (Baker's yeast).